The following is a 218-amino-acid chain: Alkylmercury lyase (218 aa).

It belongs to the MerB family.

It carries out the reaction an alkylmercury + H(+) = an alkane + Hg(2+). In terms of biological role, cleaves the carbon-mercury bond of organomercurials such as phenylmercuric acetate. One product is Hg(2+), which is subsequently detoxified by the mercuric reductase. This is Alkylmercury lyase (merB1) from Bacillus cereus.